The sequence spans 99 residues: CLAVATA3/ESR (CLE)-related protein 17 (99 aa).

Residues 1-21 (MTHVLVRRQGQGKKRRWDVNM) form the signal peptide. Basic and acidic residues predominate over residues 77 to 89 (LSRDDIYGDDKRV). Residues 77–99 (LSRDDIYGDDKRVVHTGPNPLHN) form a disordered region. At P94 the chain carries Hydroxyproline. O-linked (Ara...) hydroxyproline glycosylation is present at P94.

It belongs to the CLV3/ESR signal peptide family. In terms of processing, the O-glycosylation (arabinosylation) of the hydroxyproline Pro-94 enhances binding affinity of the CLE17p peptide for its receptor. As to expression, mostly expressed in seedlings, roots, flowers, stems and apex, and, to a lower extent, in leaves and siliques.

The protein localises to the secreted. It localises to the extracellular space. Functionally, extracellular signal peptide that regulates cell fate. Represses root apical meristem maintenance. Regulates the transition of protophloem cells from proliferation to differentiation, thus impinging on postembryonic growth capacity of the root meristem; this signaling pathway requires CRN and CLV2. The polypeptide is CLAVATA3/ESR (CLE)-related protein 17 (Arabidopsis thaliana (Mouse-ear cress)).